The sequence spans 389 residues: Chaperone protein DnaJ (389 aa).

Residues 5-79 form the J domain; sequence KRDYYEVLGI…RKLYDQFGHE (75 aa). The CR-type zinc finger occupies 151–234; the sequence is GCNKTIKYER…CRSNKYTVTN (84 aa). Zn(2+) is bound by residues cysteine 164, cysteine 167, cysteine 182, cysteine 185, cysteine 208, cysteine 211, cysteine 222, and cysteine 225. 4 CXXCXGXG motif repeats span residues 164–171, 182–189, 208–215, and 222–229; these read CHSCNGFG, CKDCNGNG, CSTCNGQG, and CKTCRSNK.

It belongs to the DnaJ family. As to quaternary structure, homodimer. Requires Zn(2+) as cofactor.

Its subcellular location is the cytoplasm. In terms of biological role, participates actively in the response to hyperosmotic and heat shock by preventing the aggregation of stress-denatured proteins and by disaggregating proteins, also in an autonomous, DnaK-independent fashion. Unfolded proteins bind initially to DnaJ; upon interaction with the DnaJ-bound protein, DnaK hydrolyzes its bound ATP, resulting in the formation of a stable complex. GrpE releases ADP from DnaK; ATP binding to DnaK triggers the release of the substrate protein, thus completing the reaction cycle. Several rounds of ATP-dependent interactions between DnaJ, DnaK and GrpE are required for fully efficient folding. Also involved, together with DnaK and GrpE, in the DNA replication of plasmids through activation of initiation proteins. This chain is Chaperone protein DnaJ, found in Mycoplasma genitalium (strain ATCC 33530 / DSM 19775 / NCTC 10195 / G37) (Mycoplasmoides genitalium).